Here is a 320-residue protein sequence, read N- to C-terminus: o-succinylbenzoate synthase (320 aa).

Lysine 133 serves as the catalytic Proton donor. The Mg(2+) site is built by aspartate 161, glutamate 190, and aspartate 213. Lysine 235 (proton acceptor) is an active-site residue.

It belongs to the mandelate racemase/muconate lactonizing enzyme family. MenC type 1 subfamily. Requires a divalent metal cation as cofactor.

It carries out the reaction (1R,6R)-6-hydroxy-2-succinyl-cyclohexa-2,4-diene-1-carboxylate = 2-succinylbenzoate + H2O. It functions in the pathway quinol/quinone metabolism; 1,4-dihydroxy-2-naphthoate biosynthesis; 1,4-dihydroxy-2-naphthoate from chorismate: step 4/7. The protein operates within quinol/quinone metabolism; menaquinone biosynthesis. Functionally, converts 2-succinyl-6-hydroxy-2,4-cyclohexadiene-1-carboxylate (SHCHC) to 2-succinylbenzoate (OSB). This chain is o-succinylbenzoate synthase, found in Citrobacter koseri (strain ATCC BAA-895 / CDC 4225-83 / SGSC4696).